A 155-amino-acid chain; its full sequence is Transcription antitermination protein NusB (155 aa).

It belongs to the NusB family.

Involved in transcription antitermination. Required for transcription of ribosomal RNA (rRNA) genes. Binds specifically to the boxA antiterminator sequence of the ribosomal RNA (rrn) operons. This is Transcription antitermination protein NusB from Mesorhizobium japonicum (strain LMG 29417 / CECT 9101 / MAFF 303099) (Mesorhizobium loti (strain MAFF 303099)).